A 441-amino-acid polypeptide reads, in one-letter code: Tol-Pal system protein TolB (441 aa).

The first 23 residues, 1 to 23 (MRNAIATVLLGLAMLLPVGAVQA), serve as a signal peptide directing secretion. The disordered stretch occupies residues 420–441 (RNLKPVKTPDGASDPSWSPLQN).

The protein belongs to the TolB family. As to quaternary structure, the Tol-Pal system is composed of five core proteins: the inner membrane proteins TolA, TolQ and TolR, the periplasmic protein TolB and the outer membrane protein Pal. They form a network linking the inner and outer membranes and the peptidoglycan layer.

Its subcellular location is the periplasm. Part of the Tol-Pal system, which plays a role in outer membrane invagination during cell division and is important for maintaining outer membrane integrity. This Ruegeria sp. (strain TM1040) (Silicibacter sp.) protein is Tol-Pal system protein TolB.